A 110-amino-acid polypeptide reads, in one-letter code: Nucleoid-associated protein NFA_2940 (110 aa).

It belongs to the YbaB/EbfC family. As to quaternary structure, homodimer.

Its subcellular location is the cytoplasm. The protein localises to the nucleoid. Binds to DNA and alters its conformation. May be involved in regulation of gene expression, nucleoid organization and DNA protection. The chain is Nucleoid-associated protein NFA_2940 from Nocardia farcinica (strain IFM 10152).